The sequence spans 600 residues: ATP-dependent zinc metalloprotease FtsH 1 (600 aa).

The Cytoplasmic segment spans residues 1-8 (MKTHYFKK). A helical membrane pass occupies residues 9 to 29 (IFNLKFLVIFFSILFCILLIL). The Extracellular portion of the chain corresponds to 30–130 (DLTFERRIKG…PKTDFHLSEL (101 aa)). Residues 131–151 (ILSLVPIVSSTIFMFYIISNI) form a helical membrane-spanning segment. The Cytoplasmic portion of the chain corresponds to 152 to 600 (KKSSGKLNSN…IEQLVVNTKK (449 aa)). ATP is bound at residue 215–222 (GPPGTGKT). A Zn(2+)-binding site is contributed by H437. The active site involves E438. The Zn(2+) site is built by H441 and D513.

It in the central section; belongs to the AAA ATPase family. In the C-terminal section; belongs to the peptidase M41 family. As to quaternary structure, homohexamer. Zn(2+) serves as cofactor.

It localises to the cell membrane. In terms of biological role, acts as a processive, ATP-dependent zinc metallopeptidase for both cytoplasmic and membrane proteins. Plays a role in the quality control of integral membrane proteins. The chain is ATP-dependent zinc metalloprotease FtsH 1 from Phytoplasma mali (strain AT).